A 334-amino-acid polypeptide reads, in one-letter code: Glycerol-3-phosphate dehydrogenase [NAD(P)+] (334 aa).

Residues Trp13, Arg33, and Lys106 each contribute to the NADPH site. Sn-glycerol 3-phosphate-binding residues include Lys106, Gly137, and Ser139. Ala141 contributes to the NADPH binding site. Residues Lys192, Asp245, Ser255, Arg256, and Asn257 each contribute to the sn-glycerol 3-phosphate site. The active-site Proton acceptor is Lys192. An NADPH-binding site is contributed by Arg256. Positions 280 and 282 each coordinate NADPH.

Belongs to the NAD-dependent glycerol-3-phosphate dehydrogenase family.

The protein resides in the cytoplasm. The catalysed reaction is sn-glycerol 3-phosphate + NAD(+) = dihydroxyacetone phosphate + NADH + H(+). The enzyme catalyses sn-glycerol 3-phosphate + NADP(+) = dihydroxyacetone phosphate + NADPH + H(+). The protein operates within membrane lipid metabolism; glycerophospholipid metabolism. Its function is as follows. Catalyzes the reduction of the glycolytic intermediate dihydroxyacetone phosphate (DHAP) to sn-glycerol 3-phosphate (G3P), the key precursor for phospholipid synthesis. The chain is Glycerol-3-phosphate dehydrogenase [NAD(P)+] from Chlamydia abortus (strain DSM 27085 / S26/3) (Chlamydophila abortus).